Here is a 391-residue protein sequence, read N- to C-terminus: RNA-binding motif protein, X chromosome (391 aa).

An N-acetylmethionine; in Heterogeneous nuclear ribonucleoprotein G; alternate modification is found at Met1. At Val2 the chain carries N-acetylvaline; in Heterogeneous nuclear ribonucleoprotein G, N-terminally processed. The region spanning 8–86 is the RRM domain; that stretch reads GKLFIGGLNT…KAIKVEQATK (79 aa). Residue Lys22 forms a Glycyl lysine isopeptide (Lys-Gly) (interchain with G-Cter in SUMO2) linkage. An N6-acetyllysine modification is found at Lys30. Over residues 61–80 the composition is skewed to basic and acidic residues; that stretch reads DAKDAARDMNGKSLDGKAIK. The disordered stretch occupies residues 61 to 391; it reads DAKDAARDMN…SDRGGGRSRY (331 aa). Glycyl lysine isopeptide (Lys-Gly) (interchain with G-Cter in SUMO2) cross-links involve residues Lys80 and Lys86. A phosphoserine mark is found at Ser88 and Ser91. A compositionally biased stretch (gly residues) spans 109 to 120; the sequence is LRGGRGGSGGTR. Omega-N-methylarginine occurs at positions 125, 144, and 164. Pro residues predominate over residues 151 to 164; the sequence is RGPPPRSGGPPPKR. The residue at position 165 (Ser165) is a Phosphoserine. The residue at position 172 (Arg172) is an Omega-N-methylarginine. Ser174 is subject to Phosphoserine. A necessary for the association to nascent RNAPII transcripts and nuclear localization region spans residues 186–236; it reads GRDSYGGPPRREPLPSRRDVYLSPRDDGYSTKDSYSSRDYPSSRDTRDYAP. Basic and acidic residues-rich tracts occupy residues 194-215 and 241-274; these read PRRE…DGYS and YTYR…DYSD. Phosphoserine is present on residues Ser261, Ser328, Ser329, Ser330, and Ser332. Residues 323–337 are compositionally biased toward low complexity; it reads SRDSYSSSRSDLYSS. The segment at 333–391 is necessary for RNA-binding; it reads DLYSSGRDRVGRQDRGLPPSMERGYPPPRDSYSSSSRGAPRGGGRGGSRSDRGGGRSRY. Residues 338–347 are compositionally biased toward basic and acidic residues; it reads GRDRVGRQDR. Residue Ser352 is modified to Phosphoserine. Low complexity predominate over residues 362–371; the sequence is DSYSSSSRGA. The segment covering 380 to 391 has biased composition (basic and acidic residues); it reads SRSDRGGGRSRY.

As to quaternary structure, homomultimer. Found in the supraspliceosome complex. Identified in the spliceosome C complex. Forms a complex with ILF2, ILF3, YLPM1, KHDRBS1, NCOA5 and PPP1CA. Interacts with CLK2, KHDRBS2, KHDRBS3, SAFB/SAFB1, TRA2B and YTHDC1. Interacts with ERAP1; the interaction is RNA-independent. Interacts with PPIA/CYPA. O-glycosylated. In terms of processing, arg-185 is dimethylated, probably to asymmetric dimethylarginine.

The protein resides in the nucleus. Its function is as follows. RNA-binding protein that plays several role in the regulation of pre- and post-transcriptional processes. Implicated in tissue-specific regulation of gene transcription and alternative splicing of several pre-mRNAs. Binds to and stimulates transcription from the tumor suppressor TXNIP gene promoter; may thus be involved in tumor suppression. When associated with SAFB, binds to and stimulates transcription from the SREBF1 promoter. Associates with nascent mRNAs transcribed by RNA polymerase II. Component of the supraspliceosome complex that regulates pre-mRNA alternative splice site selection. Can either activate or suppress exon inclusion; acts additively with TRA2B to promote exon 7 inclusion of the survival motor neuron SMN. Represses the splicing of MAPT/Tau exon 10. Binds preferentially to single-stranded 5'-CC[A/C]-rich RNA sequence motifs localized in a single-stranded conformation; probably binds RNA as a homodimer. Binds non-specifically to pre-mRNAs. Also plays a role in the cytoplasmic TNFR1 trafficking pathways; promotes both the IL-1-beta-mediated inducible proteolytic cleavage of TNFR1 ectodomains and the release of TNFR1 exosome-like vesicles to the extracellular compartment. The polypeptide is RNA-binding motif protein, X chromosome (RBMX) (Macaca fascicularis (Crab-eating macaque)).